Consider the following 359-residue polypeptide: MSGLTVSIRGRNGAFAIEAGFAAEGGVTALFGHSGAGKTTLLKMIAGTLRPENGRIAVGDFTLFDAQKGINLPPEKRRIGYVFQDARLFAYMSVKRNLTYARWAGHRPATRSFDEVVALLGIGHLLDRRPSTLSGGERQRVAIGRALLSDPALLLLDEPLSSLDHARRQEILPFIERLRDESHVPIVYVSHEIDEVARLADQIVLLSAGRVTASGAAADIFPLIDAESEGGGVLLEGIVSAYDERYKLAEIDLGGASFQLSDAGLKQTMHVRLRVRARDVSIARKIPEAISIRNLLPVTVTGIERGEGPNAHVFLDFRGRRLGARLTRRSVDDLGLSVGDQVVALVKAVSVDRAAIREK.

Residues 1 to 233 enclose the ABC transporter domain; that stretch reads MSGLTVSIRG…IDAESEGGGV (233 aa). Residue 32-39 coordinates ATP; it reads GHSGAGKT. The Mop domain occupies 289 to 355; sequence AISIRNLLPV…VKAVSVDRAA (67 aa).

Belongs to the ABC transporter superfamily. Molybdate importer (TC 3.A.1.8) family. In terms of assembly, the complex is composed of two ATP-binding proteins (ModC), two transmembrane proteins (ModB) and a solute-binding protein (ModA).

The protein localises to the cell inner membrane. The enzyme catalyses molybdate(out) + ATP + H2O = molybdate(in) + ADP + phosphate + H(+). Part of the ABC transporter complex ModABC involved in molybdenum import. Responsible for energy coupling to the transport system. This is Molybdenum import ATP-binding protein ModC from Brucella abortus (strain 2308).